A 340-amino-acid chain; its full sequence is tRNA N6-adenosine threonylcarbamoyltransferase (340 aa).

2 residues coordinate Fe cation: His-113 and His-117. Residues 135–139, Asp-169, Gly-182, Asp-186, and Asn-274 contribute to the substrate site; that span reads LVSGG. Residue Asp-302 coordinates Fe cation.

This sequence belongs to the KAE1 / TsaD family. Requires Fe(2+) as cofactor.

The protein localises to the cytoplasm. It carries out the reaction L-threonylcarbamoyladenylate + adenosine(37) in tRNA = N(6)-L-threonylcarbamoyladenosine(37) in tRNA + AMP + H(+). Functionally, required for the formation of a threonylcarbamoyl group on adenosine at position 37 (t(6)A37) in tRNAs that read codons beginning with adenine. Is involved in the transfer of the threonylcarbamoyl moiety of threonylcarbamoyl-AMP (TC-AMP) to the N6 group of A37, together with TsaE and TsaB. TsaD likely plays a direct catalytic role in this reaction. This chain is tRNA N6-adenosine threonylcarbamoyltransferase, found in Mycobacterium sp. (strain KMS).